We begin with the raw amino-acid sequence, 295 residues long: UDP-N-acetylenolpyruvoylglucosamine reductase (295 aa).

The 168-residue stretch at 27–194 folds into the FAD-binding PCMH-type domain; sequence GVGGEAEVWF…TRVRLKLRRS (168 aa). Residue R174 is part of the active site. The active-site Proton donor is C221. The active site involves E287.

It belongs to the MurB family. FAD serves as cofactor.

The protein resides in the cytoplasm. It carries out the reaction UDP-N-acetyl-alpha-D-muramate + NADP(+) = UDP-N-acetyl-3-O-(1-carboxyvinyl)-alpha-D-glucosamine + NADPH + H(+). The protein operates within cell wall biogenesis; peptidoglycan biosynthesis. Cell wall formation. The sequence is that of UDP-N-acetylenolpyruvoylglucosamine reductase from Deinococcus geothermalis (strain DSM 11300 / CIP 105573 / AG-3a).